Consider the following 354-residue polypeptide: Peptide chain release factor 1 (354 aa).

The residue at position 230 (Gln230) is an N5-methylglutamine.

It belongs to the prokaryotic/mitochondrial release factor family. Methylated by PrmC. Methylation increases the termination efficiency of RF1.

The protein localises to the cytoplasm. Peptide chain release factor 1 directs the termination of translation in response to the peptide chain termination codons UAG and UAA. The polypeptide is Peptide chain release factor 1 (Leptospira interrogans serogroup Icterohaemorrhagiae serovar copenhageni (strain Fiocruz L1-130)).